Here is a 403-residue protein sequence, read N- to C-terminus: Phosphopentomutase (403 aa).

Asp13, Asp298, His303, Asp339, His340, and His351 together coordinate Mn(2+).

This sequence belongs to the phosphopentomutase family. Mn(2+) serves as cofactor.

The protein resides in the cytoplasm. It carries out the reaction 2-deoxy-alpha-D-ribose 1-phosphate = 2-deoxy-D-ribose 5-phosphate. It catalyses the reaction alpha-D-ribose 1-phosphate = D-ribose 5-phosphate. The protein operates within carbohydrate degradation; 2-deoxy-D-ribose 1-phosphate degradation; D-glyceraldehyde 3-phosphate and acetaldehyde from 2-deoxy-alpha-D-ribose 1-phosphate: step 1/2. Functionally, isomerase that catalyzes the conversion of deoxy-ribose 1-phosphate (dRib-1-P) and ribose 1-phosphate (Rib-1-P) to deoxy-ribose 5-phosphate (dRib-5-P) and ribose 5-phosphate (Rib-5-P), respectively. This is Phosphopentomutase from Streptococcus pyogenes serotype M3 (strain ATCC BAA-595 / MGAS315).